A 1099-amino-acid chain; its full sequence is Solute carrier family 12 member 1 (1099 aa).

The Cytoplasmic segment spans residues 1 to 177 (MSLNNSSSVF…EDNKAGAVKF (177 aa)). The RFXV motif motif lies at 20–23 (RFQV). Phosphoserine is present on residues S60 and S90. T94, T99, T104, and T117 each carry phosphothreonine. Phosphoserine is present on S119. S129 is modified (phosphoserine; by AMPK). S147 bears the Phosphoserine mark. The disordered stretch occupies residues 147 to 169 (SADRVANGEGMPGEEHAENKEED). The span at 159–169 (GEEHAENKEED) shows a compositional bias: basic and acidic residues. Residues 178-198 (GWVKGVLVRCMLNIWGVMLFI) traverse the membrane as a helical segment. The Extracellular segment spans residues 199–201 (RLS). A helical transmembrane segment spans residues 202-222 (WIVGEAGIGLGVVIILLSTMV). Residues 223 to 259 (TSITGLSTSAIATNGFVRGGGAYYLISRSLGPEFGGS) are Cytoplasmic-facing. A helical membrane pass occupies residues 260–280 (IGLIFAFANAVAVAMYVVGFA). The Extracellular portion of the chain corresponds to 281-302 (ETVVDLLKESDSMMVDPTNDIR). The chain crosses the membrane as a helical span at residues 303 to 323 (IIGSITVVILLGISVAGMEWE). The Cytoplasmic portion of the chain corresponds to 324 to 327 (AKAQ). The chain crosses the membrane as a helical span at residues 328–348 (VILLIILLIAIANFFIGTVIP). Residues 349-379 (SNNEKKSRGFFNYQASIFAENFGPSFTKGEG) lie on the Extracellular side of the membrane. A helical membrane pass occupies residues 380–400 (FFSVFAIFFPAATGILAGANI). Residues 401-417 (SGDLEDPQDAIPRGTML) are Cytoplasmic-facing. Residues 418-438 (AIFITTVAYIGVAICVGACVV) form a helical membrane-spanning segment. Residues 439 to 550 (RDATGSMNDT…NNEPLRGYIL (112 aa)) are Extracellular-facing. N-linked (GlcNAc...) asparagine glycosylation is found at N446 and N456. 2 helical membrane-spanning segments follow: residues 551-571 (TFVIAMAFILIAELNTIAPII) and 572-592 (SNFFLASYALINFSCFHASYA). The Extracellular portion of the chain corresponds to 593-609 (KSPGWRPAYGIYNMWVS). A helical transmembrane segment spans residues 610 to 630 (LFGAVLCCAVMFVINWWAAVI). Topologically, residues 631 to 1099 (TYVIEFFLYI…NHKNVLTFYS (469 aa)) are cytoplasmic.

It belongs to the SLC12A transporter family. In terms of assembly, when phosphorylated, interacts with PPP3CB. Phosphorylated at Ser-90, Thr-99 and Thr-104 by OXSR1/OSR1 and STK39/SPAK downstream of WNK kinases (WNK1, WNK2, WNK3 or WNK4), promoting its activity. Predominant in kidney. The 3 isoforms are differentially distributed within the kidney: B almost exclusively in cortex, F almost exclusively in medulla, and A about equally distributed.

Its subcellular location is the apical cell membrane. It carries out the reaction K(+)(out) + 2 chloride(out) + Na(+)(out) = K(+)(in) + 2 chloride(in) + Na(+)(in). Activated following phosphorylation by OXSR1/OSR1 and STK39/SPAK downstream of WNK kinases (WNK1, WNK2, WNK3 or WNK4). Its function is as follows. Renal sodium, potassium and chloride ion cotransporter that mediates the transepithelial NaCl reabsorption in the thick ascending limb and plays an essential role in the urinary concentration and volume regulation. Electrically silent transporter system. The chain is Solute carrier family 12 member 1 (SLC12A1) from Oryctolagus cuniculus (Rabbit).